The primary structure comprises 1469 residues: Accumulation-associated protein (1469 aa).

Residues 1 to 52 form the signal peptide; it reads MGKRRQGPINKKVDFLPNKLNKYSIRKFTVGTASILLGSTLIFGSSSHEAKA. Disordered stretches follow at residues 52–164, 486–511, and 528–1443; these read AAEE…SEPV, GIET…TPTT, and EIKP…QANE. Composition is skewed to polar residues over residues 75–94 and 110–125; these read ENTN…STLQ and KANS…SEAP. The span at 129–144 shows a compositional bias: basic and acidic residues; sequence DLARKEDIPAVSKNEE. Positions 145 to 164 are enriched in polar residues; sequence LQSSQPNTDSKIEPTTSEPV. 7 G5 domains span residues 446–528, 574–656, 702–784, 830–912, 958–1040, 1086–1168, and 1211–1296; these read PKAV…GGEE, YGPV…GGEE, YGPV…GGEQ, and VTKY…GPTK. Residues 489-500 show a composition bias toward low complexity; sequence TTTTPTYVNPNT. Basic and acidic residues-rich tracts occupy residues 528–537 and 589–613; these read EIKPGHKDEF and PFDK…KGEP. The span at 614-629 shows a compositional bias: low complexity; it reads GTKTITTPTTKNPLTG. Basic and acidic residues-rich tracts occupy residues 631–646 and 655–665; these read KVGE…KQPV and EEIKPGHKDEF. The span at 738–757 shows a compositional bias: low complexity; sequence KGEPGTKTITTPTTKNPLTG. Basic and acidic residues-rich tracts occupy residues 759 to 793 and 845 to 869; these read KVGE…KDEF and PFDK…KGEP. Low complexity predominate over residues 870 to 885; the sequence is GTKTITTPTTKNPLTG. The segment covering 887–921 has biased composition (basic and acidic residues); the sequence is KVGEGEPTEKVTKQPVDEIVHYGGEEIKPGHKDEF. The segment covering 994–1013 has biased composition (low complexity); it reads KGEPGTKTITTPTTKNPLTG. A compositionally biased stretch (basic and acidic residues) spans 1015–1049; sequence KVGEGEPTEKITKQPVDEIVHYGGEEIKPGHKDEF. The span at 1122–1141 shows a compositional bias: low complexity; the sequence is KGEPGTKTITTPTTKNPLTG. Composition is skewed to basic and acidic residues over residues 1143–1162, 1229–1253, and 1271–1286; these read KVGE…DEIV, PFDK…KGEP, and KVGE…KQPV. Positions 1409 to 1443 are enriched in polar residues; sequence TPTQSGAPEQPNRSMHSTDNKNQLPDTGENRQANE. Positions 1432–1436 match the LPXTG sorting signal motif; that stretch reads LPDTG. At Thr1435 the chain carries Pentaglycyl murein peptidoglycan amidated threonine. Residues 1436 to 1469 constitute a propeptide, removed by sortase; it reads GENRQANEGTLVGSLLAIVGSLFIFGRRKKGNEK.

It localises to the secreted. The protein resides in the cell wall. This Staphylococcus epidermidis (strain ATCC 12228 / FDA PCI 1200) protein is Accumulation-associated protein.